An 872-amino-acid chain; its full sequence is DNA mismatch repair protein MutS (872 aa).

Glycine 622–serine 629 contacts ATP.

This sequence belongs to the DNA mismatch repair MutS family.

In terms of biological role, this protein is involved in the repair of mismatches in DNA. It is possible that it carries out the mismatch recognition step. This protein has a weak ATPase activity. The protein is DNA mismatch repair protein MutS of Geobacter metallireducens (strain ATCC 53774 / DSM 7210 / GS-15).